The following is a 119-amino-acid chain: Multi-drug resistance efflux pump PmrA homolog (119 aa).

The next 4 helical transmembrane spans lie at 1–20 (ILIG…FVQS), 22–42 (LQLG…MPSV), 64–84 (MCSN…AGYI), and 88–108 (AAIV…FINF).

Belongs to the major facilitator superfamily.

The protein resides in the cell membrane. This chain is Multi-drug resistance efflux pump PmrA homolog (pmrA), found in Lactococcus lactis subsp. cremoris (Streptococcus cremoris).